A 140-amino-acid polypeptide reads, in one-letter code: UPF0102 protein alr1796 (140 aa).

It belongs to the UPF0102 family.

In Nostoc sp. (strain PCC 7120 / SAG 25.82 / UTEX 2576), this protein is UPF0102 protein alr1796.